The following is a 389-amino-acid chain: Major outer membrane porin (389 aa).

Belongs to the chlamydial porin (CP) (TC 1.B.2) family. In terms of assembly, part of a disulfide cross-linked outer membrane complex (COMC) composed of the major outer membrane porin (MOMP), the small cysteine-rich protein (OmcA) and the large cysteine-rich periplasmic protein (OmcB).

The protein localises to the cell outer membrane. In elementary bodies (EBs, the infectious stage, which is able to survive outside the host cell) provides the structural integrity of the outer envelope through disulfide cross-links with the small cysteine-rich protein and the large cysteine-rich periplasmic protein. It has been described in publications as the Sarkosyl-insoluble COMC (Chlamydia outer membrane complex), and serves as the functional equivalent of peptidoglycan. Its function is as follows. Permits diffusion of specific solutes through the outer membrane. In Chlamydia pneumoniae (Chlamydophila pneumoniae), this protein is Major outer membrane porin (ompA).